Reading from the N-terminus, the 433-residue chain is Acetylcholine receptor-like protein cup-4 (433 aa).

Positions 1–24 (MKIIIFVCFILIFYLPIQKKHVNS) are cleaved as a signal peptide. Asn41 and Asn68 each carry an N-linked (GlcNAc...) asparagine glycan. A disulfide bridge links Cys178 with Cys192. Residues Asn237 and Asn249 are each glycosylated (N-linked (GlcNAc...) asparagine). The next 4 helical transmembrane spans lie at 282 to 302 (EAAVVTPCIVVASLISMTFFI), 307 to 327 (STFLLMMLHFYVQLIFLHDLV), 337 to 357 (IPFCIKLIGILMYTNGLTLVL), and 413 to 433 (PIIGFVLIILLICMFFVCLLL).

The protein belongs to the ligand-gated ion channel (TC 1.A.9) family. Acetylcholine receptor (TC 1.A.9.1) subfamily. Expressed in coelomocytes.

It localises to the cytoplasmic vesicle membrane. Functionally, thought to regulate endocytosis in coelomocytes through modulation of phospholipase C activity. Possible acetylcholine receptor. The chain is Acetylcholine receptor-like protein cup-4 (cup-4) from Caenorhabditis elegans.